Reading from the N-terminus, the 261-residue chain is MASRAAPVRQTCCCFNIRVATIALAIYHIVMSVLLFIEHVVEVARGKVSCRFFKMPYLRMADLLSSFLLIGVLFIISISLLFGVVKNREKYLIPFLSLQIMDFLLCLLTLLGSYIELPAYLKLARPRPGPSKVPLMTLQLLDFCLSILTLCSSYMEVPTYLNFKSMNHMNYLPSQEGVPHSQFINMMLIFSVAFITVLILKVYMFKCVYTCYKFLKHMNSAMEDSSSKMFLKVALPSYEEALSLPPKTPEGDPAPPPYSEV.

5 helical membrane-spanning segments follow: residues 21 to 41, 65 to 85, 92 to 112, 133 to 153, and 183 to 203; these read TIAL…EHVV, SSFL…FGVV, LIPF…TLLG, VPLM…LCSS, and FINM…LKVY. Residues 242 to 261 are disordered; sequence LSLPPKTPEGDPAPPPYSEV. Residues 246 to 261 are compositionally biased toward pro residues; that stretch reads PKTPEGDPAPPPYSEV. Position 258 is a phosphotyrosine (Tyr-258).

The protein belongs to the LAPTM4/LAPTM5 transporter family. As to quaternary structure, binds to ubiquitin. Preferentially expressed in adult hematopoietic tissues. High levels in lymphoid and myeloid tissues.

The protein localises to the lysosome membrane. Its function is as follows. May have a special functional role during embryogenesis and in adult hematopoietic cells. The polypeptide is Lysosomal-associated transmembrane protein 5 (Laptm5) (Mus musculus (Mouse)).